The chain runs to 220 residues: Ribose-5-phosphate isomerase A (220 aa).

Residues 28–31 (TGST), 81–84 (DGAD), and 94–97 (KGGG) each bind substrate. Glu103 (proton acceptor) is an active-site residue. A substrate-binding site is contributed by Lys121.

Belongs to the ribose 5-phosphate isomerase family. Homodimer.

The enzyme catalyses aldehydo-D-ribose 5-phosphate = D-ribulose 5-phosphate. The protein operates within carbohydrate degradation; pentose phosphate pathway; D-ribose 5-phosphate from D-ribulose 5-phosphate (non-oxidative stage): step 1/1. Its function is as follows. Catalyzes the reversible conversion of ribose-5-phosphate to ribulose 5-phosphate. The sequence is that of Ribose-5-phosphate isomerase A from Shewanella putrefaciens (strain CN-32 / ATCC BAA-453).